A 322-amino-acid chain; its full sequence is GTP 3',8-cyclase (322 aa).

A Radical SAM core domain is found at 5 to 217 (SYGRVVDYLR…DIISKKYNIK (213 aa)). A GTP-binding site is contributed by arginine 14. The [4Fe-4S] cluster site is built by cysteine 21 and cysteine 25. Residue tyrosine 27 participates in S-adenosyl-L-methionine binding. Cysteine 28 is a binding site for [4Fe-4S] cluster. Residue arginine 64 coordinates GTP. Glycine 68 is a binding site for S-adenosyl-L-methionine. Threonine 95 is a GTP binding site. S-adenosyl-L-methionine is bound at residue serine 119. A GTP-binding site is contributed by lysine 155. Methionine 189 serves as a coordination point for S-adenosyl-L-methionine. Positions 249 and 252 each coordinate [4Fe-4S] cluster. Position 254–256 (254–256 (RLR)) interacts with GTP. Cysteine 266 lines the [4Fe-4S] cluster pocket.

The protein belongs to the radical SAM superfamily. MoaA family. As to quaternary structure, monomer and homodimer. [4Fe-4S] cluster serves as cofactor.

It catalyses the reaction GTP + AH2 + S-adenosyl-L-methionine = (8S)-3',8-cyclo-7,8-dihydroguanosine 5'-triphosphate + 5'-deoxyadenosine + L-methionine + A + H(+). Its pathway is cofactor biosynthesis; molybdopterin biosynthesis. In terms of biological role, catalyzes the cyclization of GTP to (8S)-3',8-cyclo-7,8-dihydroguanosine 5'-triphosphate. This chain is GTP 3',8-cyclase, found in Campylobacter fetus subsp. fetus (strain 82-40).